The primary structure comprises 1025 residues: Adenylate-forming reductase 03009 (1025 aa).

The segment at 38–422 (FEFHAKSNPQ…LGRIDNQVKI (385 aa)) is adenylation (A) domain. AMP-binding positions include 332-333 (VT) and 412-415 (HLGR). The segment at 556 to 638 (SLGSTNTKIS…AILIWICVKK (83 aa)) is thiolation and peptide carrier (T) domain. The interval 682 to 900 (FIRRTAARVY…PPTKLWVKGV (219 aa)) is thioester reductase (TR) domain. NADP(+) is bound by residues 685–688 (RTAA), 769–771 (SAL), and Tyr-840.

It belongs to the adenylate-forming reductase family.

In terms of biological role, adenylate-forming reductase, a natural product biosynthesis enzyme that resembles non-ribosomal peptide synthetases, yet serves to modify one substrate, rather than to condense two or more building blocks. The A-domain preferentially accepts L-serine, L-alanine and L-valine as substrates. The natural product of the enzyme is not yet known. This is Adenylate-forming reductase 03009 from Coprinopsis cinerea (strain Okayama-7 / 130 / ATCC MYA-4618 / FGSC 9003) (Inky cap fungus).